The following is a 1027-amino-acid chain: 2-oxoglutarate dehydrogenase, mitochondrial (1027 aa).

Arginine 315, aspartate 413, asparagine 446, isoleucine 448, and glutamine 674 together coordinate thiamine diphosphate. Mg(2+)-binding residues include aspartate 413, asparagine 446, and isoleucine 448.

The protein belongs to the alpha-ketoglutarate dehydrogenase family. In terms of assembly, homodimer. Component of the 2-oxoglutarate dehydrogenase complex. Requires thiamine diphosphate as cofactor. It depends on Mg(2+) as a cofactor.

The protein localises to the mitochondrion matrix. It carries out the reaction N(6)-[(R)-lipoyl]-L-lysyl-[protein] + 2-oxoglutarate + H(+) = N(6)-[(R)-S(8)-succinyldihydrolipoyl]-L-lysyl-[protein] + CO2. Functionally, the 2-oxoglutarate dehydrogenase complex catalyzes the overall conversion of 2-oxoglutarate to succinyl-CoA and CO(2). It contains multiple copies of three enzymatic components: 2-oxoglutarate dehydrogenase (E1), dihydrolipoamide succinyltransferase (E2) and lipoamide dehydrogenase (E3). This Caenorhabditis briggsae protein is 2-oxoglutarate dehydrogenase, mitochondrial (ogdh-1).